Consider the following 541-residue polypeptide: Peptidyl-prolyl isomerase cwc-27 (541 aa).

The PPIase cyclophilin-type domain maps to 11-193 (PTASAIIHTT…YPIKITRIEI (183 aa)). Disordered stretches follow at residues 199 to 443 (DDMQ…GQAD) and 513 to 541 (TLKE…RDRH). Composition is skewed to basic and acidic residues over residues 279–307 (AKRD…ESRR), 316–348 (QKKE…KTNE), and 361–374 (IHSE…KKSA). The span at 432–442 (DVEDGEQDGQA) shows a compositional bias: acidic residues. Composition is skewed to basic and acidic residues over residues 513 to 525 (TLKE…RDAK) and 532 to 541 (AWDRGRRDRH).

This sequence belongs to the cyclophilin-type PPIase family. CWC27 subfamily. Associated with the spliceosome.

The protein localises to the cytoplasm. It localises to the nucleus. It carries out the reaction [protein]-peptidylproline (omega=180) = [protein]-peptidylproline (omega=0). Its function is as follows. PPIases accelerate the folding of proteins. It catalyzes the cis-trans isomerization of proline imidic peptide bonds in oligopeptides. Involved in pre-mRNA splicing. The sequence is that of Peptidyl-prolyl isomerase cwc-27 (cwc-27) from Neurospora crassa (strain ATCC 24698 / 74-OR23-1A / CBS 708.71 / DSM 1257 / FGSC 987).